Consider the following 436-residue polypeptide: 3-ketoacyl-CoA thiolase (436 aa).

The Acyl-thioester intermediate role is filled by C99. Residues H392 and C422 each act as proton acceptor in the active site.

It belongs to the thiolase-like superfamily. Thiolase family. In terms of assembly, heterotetramer of two alpha chains (FadJ) and two beta chains (FadI).

It localises to the cytoplasm. The enzyme catalyses an acyl-CoA + acetyl-CoA = a 3-oxoacyl-CoA + CoA. It functions in the pathway lipid metabolism; fatty acid beta-oxidation. Functionally, catalyzes the final step of fatty acid oxidation in which acetyl-CoA is released and the CoA ester of a fatty acid two carbons shorter is formed. This is 3-ketoacyl-CoA thiolase from Photorhabdus laumondii subsp. laumondii (strain DSM 15139 / CIP 105565 / TT01) (Photorhabdus luminescens subsp. laumondii).